Consider the following 924-residue polypeptide: Nodulation receptor kinase (924 aa).

A signal peptide spans 1-29 (MMELRVICIIRLVVACVLCLCIFIRSASS). A coiled-coil region spans residues 361–382 (EVIQKMRKELLLQNQDNEALES). LRR repeat units follow at residues 406 to 428 (VITK…VTEM), 430 to 452 (KLQI…PPSS), 453 to 475 (LLIS…IISL), and 477 to 498 (HLNS…AKLN). A helical transmembrane segment spans residues 520–540 (FMIGAITSGSILITLAVVILF). The 278-residue stretch at 595-872 (EKYKTLIGEG…IVRELEDALI (278 aa)) folds into the Protein kinase domain. ATP-binding positions include 601-609 (IGEGGFGSV) and lysine 623. Aspartate 721 functions as the Proton acceptor in the catalytic mechanism.

This sequence belongs to the protein kinase superfamily. Ser/Thr protein kinase family. May be phosphorylated.

It localises to the membrane. It catalyses the reaction L-seryl-[protein] + ATP = O-phospho-L-seryl-[protein] + ADP + H(+). It carries out the reaction L-threonyl-[protein] + ATP = O-phospho-L-threonyl-[protein] + ADP + H(+). Its function is as follows. Involved in the perception of symbiotic fungi and bacteria and required for the calcium spiking. Part of the perception/transduction system leading to nodulation or mycorrhizal infection. In Pisum sativum (Garden pea), this protein is Nodulation receptor kinase (NORK).